The following is a 317-amino-acid chain: Porphobilinogen deaminase (317 aa).

S-(dipyrrolylmethanemethyl)cysteine is present on cysteine 245.

Belongs to the HMBS family. As to quaternary structure, monomer. It depends on dipyrromethane as a cofactor.

The catalysed reaction is 4 porphobilinogen + H2O = hydroxymethylbilane + 4 NH4(+). It functions in the pathway porphyrin-containing compound metabolism; protoporphyrin-IX biosynthesis; coproporphyrinogen-III from 5-aminolevulinate: step 2/4. It participates in porphyrin-containing compound metabolism; chlorophyll biosynthesis. Tetrapolymerization of the monopyrrole PBG into the hydroxymethylbilane pre-uroporphyrinogen in several discrete steps. In Synechococcus sp. (strain CC9902), this protein is Porphobilinogen deaminase.